Here is a 467-residue protein sequence, read N- to C-terminus: Argininosuccinate lyase (467 aa).

It belongs to the lyase 1 family. Argininosuccinate lyase subfamily.

It is found in the cytoplasm. It carries out the reaction 2-(N(omega)-L-arginino)succinate = fumarate + L-arginine. The protein operates within amino-acid biosynthesis; L-arginine biosynthesis; L-arginine from L-ornithine and carbamoyl phosphate: step 3/3. In Methylibium petroleiphilum (strain ATCC BAA-1232 / LMG 22953 / PM1), this protein is Argininosuccinate lyase.